The sequence spans 518 residues: Glutamate--cysteine ligase (518 aa).

It belongs to the glutamate--cysteine ligase type 1 family. Type 1 subfamily.

The enzyme catalyses L-cysteine + L-glutamate + ATP = gamma-L-glutamyl-L-cysteine + ADP + phosphate + H(+). It participates in sulfur metabolism; glutathione biosynthesis; glutathione from L-cysteine and L-glutamate: step 1/2. The polypeptide is Glutamate--cysteine ligase (Buchnera aphidicola subsp. Acyrthosiphon pisum (strain 5A)).